The chain runs to 388 residues: Succinate--CoA ligase [ADP-forming] subunit beta (388 aa).

Residues 9–244 (KQLFAEYGLP…PSQEDEREAH (236 aa)) enclose the ATP-grasp domain. ATP is bound by residues Lys46, 53-55 (GRG), Glu99, Thr102, and Glu107. The Mg(2+) site is built by Asn199 and Asp213. Residues Asn264 and 321–323 (GIV) contribute to the substrate site.

The protein belongs to the succinate/malate CoA ligase beta subunit family. Heterotetramer of two alpha and two beta subunits. Mg(2+) serves as cofactor.

The enzyme catalyses succinate + ATP + CoA = succinyl-CoA + ADP + phosphate. It carries out the reaction GTP + succinate + CoA = succinyl-CoA + GDP + phosphate. Its pathway is carbohydrate metabolism; tricarboxylic acid cycle; succinate from succinyl-CoA (ligase route): step 1/1. Its function is as follows. Succinyl-CoA synthetase functions in the citric acid cycle (TCA), coupling the hydrolysis of succinyl-CoA to the synthesis of either ATP or GTP and thus represents the only step of substrate-level phosphorylation in the TCA. The beta subunit provides nucleotide specificity of the enzyme and binds the substrate succinate, while the binding sites for coenzyme A and phosphate are found in the alpha subunit. The chain is Succinate--CoA ligase [ADP-forming] subunit beta from Saccharophagus degradans (strain 2-40 / ATCC 43961 / DSM 17024).